We begin with the raw amino-acid sequence, 115 residues long: Protein Wnt-2 (115 aa).

Ser-1 is lipidated: O-palmitoleoyl serine; by PORCN. A disulfide bridge links Cys-81 with Cys-96. A glycan (N-linked (GlcNAc...) asparagine) is linked at Asn-82.

It belongs to the Wnt family. Post-translationally, palmitoleoylation is required for efficient binding to frizzled receptors. Depalmitoleoylation leads to Wnt signaling pathway inhibition.

It is found in the secreted. The protein resides in the extracellular space. The protein localises to the extracellular matrix. Functionally, ligand for members of the frizzled family of seven transmembrane receptors. Probable developmental protein. May be a signaling molecule which affects the development of discrete regions of tissues. Is likely to signal over only few cell diameters. This chain is Protein Wnt-2 (WNT-2), found in Strongylocentrotus purpuratus (Purple sea urchin).